A 325-amino-acid chain; its full sequence is Melanocortin receptor 5 (325 aa).

Over 1–37 (MNSSFHLHFLDLGLNATEGNLSGLSVRNASSPCEDMG) the chain is Extracellular. Residues Asn-2, Asn-15, Asn-20, and Asn-28 are each glycosylated (N-linked (GlcNAc...) asparagine). A helical transmembrane segment spans residues 38 to 61 (IAVEVFLALGLISLLENILVIGAI). Residues 62-73 (VRNRNLHIPMYF) lie on the Cytoplasmic side of the membrane. A helical transmembrane segment spans residues 74-97 (FVGSLAVADMLVSLSNFWETITIY). Residues 98–114 (LLTNKHLVMADASVRHL) lie on the Extracellular side of the membrane. Residues 115 to 138 (DNVFDSMICISVVASMCSLLAIAV) traverse the membrane as a helical segment. Topologically, residues 139–155 (DRYVTIFCRLRYQRIMT) are cytoplasmic. A helical transmembrane segment spans residues 156 to 179 (GRRSGAIIAGIWAFCTSCGTVFIV). Residues 180 to 186 (YYESTYV) lie on the Extracellular side of the membrane. A helical membrane pass occupies residues 187 to 211 (VVCLIAMFLTMLLLMASLYTHMFLL). The Cytoplasmic portion of the chain corresponds to 212 to 239 (ARTHVRRIAALPGHSSVRQRTGVKGAIT). Residues 240-265 (LAMLLGVFIICWAPFFLHLILMISCP) form a helical membrane-spanning segment. At 266 to 273 (QNLYCSCF) the chain is on the extracellular side. The chain crosses the membrane as a helical span at residues 274–297 (MSHFNMYLILIMCNSVIDPLIYAF). Over 298-325 (RSQEMRKTFKEIVCFQGFRTPCRFPSTY) the chain is Cytoplasmic. Cys-311 carries S-palmitoyl cysteine lipidation.

It belongs to the G-protein coupled receptor 1 family.

It is found in the cell membrane. In terms of biological role, receptor for MSH (alpha, beta and gamma) and ACTH. The activity of this receptor is mediated by G proteins which activate adenylate cyclase. This receptor is a possible mediator of the immunomodulation properties of melanocortins. The protein is Melanocortin receptor 5 (MC5R) of Ovis aries (Sheep).